The chain runs to 1231 residues: Multifunctional 2-oxoglutarate metabolism enzyme (1231 aa).

Residues 1–41 (MANISSPFGQNEWLVEAMYRKFRDDPSSVDPSWHEFLVDYS) are 2-oxoglutarate dehydrogenase E1, N-terminal part. Over residues 24–37 (DDPSSVDPSWHEFL) the composition is skewed to basic and acidic residues. Residues 24 to 56 (DDPSSVDPSWHEFLVDYSPEPTSQPAAEPTRVT) form a disordered region. Residues 42–88 (PEPTSQPAAEPTRVTSPLVAERAAAAAPQAPPKPADTAAAGNGVVAA) are linker. A succinyltransferase E2 region spans residues 89 to 337 (LAAKTAVPPP…LRTIHELLLS (249 aa)). His316 serves as the catalytic Proton acceptor; for succinyltransferase activity. The segment at 338 to 1231 (DGFWDEVFRE…QQEILDEAFG (894 aa)) is 2-oxoglutarate dehydrogenase E1, C-terminal part. Residue Arg542 participates in thiamine diphosphate binding. His581 and Ser606 together coordinate 2-oxoglutarate. Thiamine diphosphate-binding residues include Ser606, Leu608, Asp649, Ala650, Ala651, and Asn682. Asp649 provides a ligand contact to Mg(2+). Residues Asn682 and Ile684 each contribute to the Mg(2+) site. Residues 787-817 (DISMKEAEDALRDYQGQLERVFNEVRELEKH) adopt a coiled-coil conformation. His1024 contacts 2-oxoglutarate. The acetyl-CoA site is built by Thr1042, Arg1058, Lys1093, Ser1096, Gln1146, Arg1153, and Arg1154.

It belongs to the 2-oxoacid dehydrogenase family. Kgd subfamily. As to quaternary structure, homodimer. The 2-oxoglutarate dehydrogenase (ODH) complex contains multiple copies of three enzymatic components: 2-oxoglutarate dehydrogenase (E1), dihydrolipoamide succinyltransferase (E2) and lipoamide dehydrogenase (E3). Mg(2+) is required as a cofactor. The cofactor is thiamine diphosphate.

The enzyme catalyses glyoxylate + 2-oxoglutarate + H(+) = 2-hydroxy-3-oxoadipate + CO2. It catalyses the reaction 2-oxoglutarate + H(+) = succinate semialdehyde + CO2. The catalysed reaction is N(6)-[(R)-lipoyl]-L-lysyl-[protein] + 2-oxoglutarate + H(+) = N(6)-[(R)-S(8)-succinyldihydrolipoyl]-L-lysyl-[protein] + CO2. It carries out the reaction N(6)-[(R)-dihydrolipoyl]-L-lysyl-[protein] + succinyl-CoA = N(6)-[(R)-S(8)-succinyldihydrolipoyl]-L-lysyl-[protein] + CoA. Its pathway is carbohydrate metabolism; tricarboxylic acid cycle; succinate from 2-oxoglutarate (transferase route): step 1/2. It participates in carbohydrate metabolism; tricarboxylic acid cycle; succinyl-CoA from 2-oxoglutarate (dehydrogenase route): step 1/1. Its activity is regulated as follows. Alpha-ketoglutarate dehydrogenase and decarboxylase activities are inhibited by unphosphorylated GarA, and allosterically activated by acetyl-CoA, the main substrate of the TCA cycle. Shows three enzymatic activities that share a first common step, the attack of thiamine-PP on 2-oxoglutarate (alpha-ketoglutarate, KG), leading to the formation of an enamine-thiamine-PP intermediate upon decarboxylation. Thus, displays KGD activity, catalyzing the decarboxylation from five-carbon 2-oxoglutarate to four-carbon succinate semialdehyde (SSA). Also catalyzes C-C bond formation between the activated aldehyde formed after decarboxylation of alpha-ketoglutarate and the carbonyl of glyoxylate (GLX), to yield 2-hydroxy-3-oxoadipate (HOA), which spontaneously decarboxylates to form 5-hydroxylevulinate (HLA). And is also a component of the 2-oxoglutarate dehydrogenase (ODH) complex, that catalyzes the overall conversion of 2-oxoglutarate to succinyl-CoA and CO(2). The KG decarboxylase and KG dehydrogenase reactions provide two alternative, tightly regulated, pathways connecting the oxidative and reductive branches of the TCA cycle. This Mycobacterium bovis (strain ATCC BAA-935 / AF2122/97) protein is Multifunctional 2-oxoglutarate metabolism enzyme (kgd).